Consider the following 130-residue polypeptide: MNLTYCLLVTGPHYGTEQASSAYLFAKALLEKGHHIAQVFFYREGVSNANQLVSPASDEFDLPKAWIALASRYNIPLQVCVAAALRRGVVDEQQAKEQGLLSSNMATKFELSGLGALAQAMLTCDRVVQF.

The Cysteine persulfide intermediate role is filled by cysteine 80.

Belongs to the DsrE/TusD family. Heterohexamer, formed by a dimer of trimers. The hexameric TusBCD complex contains 2 copies each of TusB, TusC and TusD. The TusBCD complex interacts with TusE.

The protein resides in the cytoplasm. Functionally, part of a sulfur-relay system required for 2-thiolation of 5-methylaminomethyl-2-thiouridine (mnm(5)s(2)U) at tRNA wobble positions. Accepts sulfur from TusA and transfers it in turn to TusE. In Proteus mirabilis (strain HI4320), this protein is Sulfurtransferase TusD.